The chain runs to 346 residues: KKNSILKKNQSWINATQNNFKVDDYESLIPNADLVINLTPDKQHHNVIKTLQKLMKKNSCLGYSHGFNIVEFGETIRKDITVIMVAPKCPGTEVREEYKRGFGVPTLIAVHDKNDIHQQGLDIAKAWSFSIGAHHAGVLESSFVAEVKSDLMGEQTILCGMLQTASLLCYDKLIQNKCDPAYASKLIQHGWETITESLKHGGITLMMDRLSNSXKIRAYKISEKIKKILSPLFQKHMDDIISGEFSSEMMKDWSNNDKKLLDCRRKIKNTSFEQSPIYKEKIPEQEYYDHGILMIAILKSGIELSFEKMITAGIIEESAYYESLHELPLIANTISRKKLYEMNKVI.

In terms of domain architecture, KARI N-terminal Rossmann spans 1–141 (KKNSILKKNQ…GAHHAGVLES (141 aa)). NADP(+) contacts are provided by residues serine 11 and 41 to 43 (DKQ). Histidine 65 is an active-site residue. Residue glycine 91 coordinates NADP(+). 2 consecutive KARI C-terminal knotted domains span residues 142–286 (SFVA…PEQE) and 287–346 (YYDH…NKVI). Mg(2+) is bound by residues aspartate 150, glutamate 154, glutamate 322, and glutamate 326.

This sequence belongs to the ketol-acid reductoisomerase family. Requires Mg(2+) as cofactor.

It catalyses the reaction (2R)-2,3-dihydroxy-3-methylbutanoate + NADP(+) = (2S)-2-acetolactate + NADPH + H(+). The enzyme catalyses (2R,3R)-2,3-dihydroxy-3-methylpentanoate + NADP(+) = (S)-2-ethyl-2-hydroxy-3-oxobutanoate + NADPH + H(+). It participates in amino-acid biosynthesis; L-isoleucine biosynthesis; L-isoleucine from 2-oxobutanoate: step 2/4. Its pathway is amino-acid biosynthesis; L-valine biosynthesis; L-valine from pyruvate: step 2/4. Its function is as follows. Involved in the biosynthesis of branched-chain amino acids (BCAA). Catalyzes an alkyl-migration followed by a ketol-acid reduction of (S)-2-acetolactate (S2AL) to yield (R)-2,3-dihydroxy-isovalerate. In the isomerase reaction, S2AL is rearranged via a Mg-dependent methyl migration to produce 3-hydroxy-3-methyl-2-ketobutyrate (HMKB). In the reductase reaction, this 2-ketoacid undergoes a metal-dependent reduction by NADPH to yield (R)-2,3-dihydroxy-isovalerate. This Buchnera aphidicola subsp. Uroleucon rurale protein is Ketol-acid reductoisomerase (NADP(+)) (ilvC).